Consider the following 397-residue polypeptide: Putative 8-amino-7-oxononanoate synthase (397 aa).

Arg-22 contributes to the substrate binding site. 109-110 (GW) provides a ligand contact to pyridoxal 5'-phosphate. His-139 is a binding site for substrate. Pyridoxal 5'-phosphate is bound by residues Ser-187, 212–215 (DEAH), and 241–244 (TFSK). Lys-244 carries the post-translational modification N6-(pyridoxal phosphate)lysine. A substrate-binding site is contributed by Thr-358.

Belongs to the class-II pyridoxal-phosphate-dependent aminotransferase family. BioF subfamily. In terms of assembly, homodimer. Pyridoxal 5'-phosphate is required as a cofactor.

It catalyses the reaction 6-carboxyhexanoyl-[ACP] + L-alanine + H(+) = (8S)-8-amino-7-oxononanoate + holo-[ACP] + CO2. It functions in the pathway cofactor biosynthesis; biotin biosynthesis. Functionally, catalyzes the decarboxylative condensation of pimeloyl-[acyl-carrier protein] and L-alanine to produce 8-amino-7-oxononanoate (AON), [acyl-carrier protein], and carbon dioxide. This is Putative 8-amino-7-oxononanoate synthase (bioF) from Bordetella parapertussis (strain 12822 / ATCC BAA-587 / NCTC 13253).